The chain runs to 459 residues: Ribulose bisphosphate carboxylase (459 aa).

N111 serves as a coordination point for substrate. K166 acts as the Proton acceptor in catalysis. K168 serves as a coordination point for substrate. K191, D193, and E194 together coordinate Mg(2+). K191 bears the N6-carboxylysine mark. The active-site Proton acceptor is H287. Residues R288, H321, and S368 each contribute to the substrate site.

The protein belongs to the RuBisCO large chain family. Type II subfamily. As to quaternary structure, homodimer. Mg(2+) is required as a cofactor.

The protein localises to the cytoplasm. The catalysed reaction is 2 (2R)-3-phosphoglycerate + 2 H(+) = D-ribulose 1,5-bisphosphate + CO2 + H2O. It catalyses the reaction D-ribulose 1,5-bisphosphate + O2 = 2-phosphoglycolate + (2R)-3-phosphoglycerate + 2 H(+). Its function is as follows. RuBisCO catalyzes two reactions: the carboxylation of D-ribulose 1,5-bisphosphate, the primary event in carbon dioxide fixation, as well as the oxidative fragmentation of the pentose substrate. Both reactions occur simultaneously and in competition at the same active site. This chain is Ribulose bisphosphate carboxylase, found in Halothiobacillus neapolitanus (strain ATCC 23641 / c2) (Thiobacillus neapolitanus).